A 253-amino-acid chain; its full sequence is Small ribosomal subunit protein uS3 (253 aa).

In terms of domain architecture, KH type-2 spans 21–92 (LNEFLTRELA…SVELYAEKVA (72 aa)). A disordered region spans residues 211–253 (VEPKDEILPTTPISEQKGGKPDPQVPQQPPQQPPAMPPPVPTA). The segment covering 233 to 253 (PQVPQQPPQQPPAMPPPVPTA) has biased composition (pro residues).

Belongs to the universal ribosomal protein uS3 family.

It is found in the cytoplasm. Its subcellular location is the nucleus. It localises to the nucleolus. The protein resides in the mitochondrion inner membrane. The protein localises to the cytoskeleton. It is found in the spindle. The catalysed reaction is 2'-deoxyribonucleotide-(2'-deoxyribose 5'-phosphate)-2'-deoxyribonucleotide-DNA = a 3'-end 2'-deoxyribonucleotide-(2,3-dehydro-2,3-deoxyribose 5'-phosphate)-DNA + a 5'-end 5'-phospho-2'-deoxyribonucleoside-DNA + H(+). Functionally, component of the small ribosomal subunit. The ribosome is a large ribonucleoprotein complex responsible for the synthesis of proteins in the cell. Has endonuclease activity and plays a role in repair of damaged DNA. Also involved in other processes including regulation of transcription, translation of its cognate mRNA, spindle formation and chromosome movement during mitosis, and apoptosis. This is Small ribosomal subunit protein uS3 (RPS3) from Ambystoma mexicanum (Axolotl).